The primary structure comprises 187 residues: MGRYSREPDNPAKSCKARGSNLRVHFKNTYETAMAIRKMPLRRAVRYLKNVIEKKECIPFRRFNGGVGRCAQAKQFGTTQGRWPKKSAEFLLQLLRNAESNADNKTLDVDRLVIDHIQVNRAPCLRRRTYRAHGRINPYMSSPCHIEVCLSEREDAVARVAPTDDAPAKKKLSKKKLARQKEKMMRE.

The interval 161–187 (APTDDAPAKKKLSKKKLARQKEKMMRE) is disordered. Residues 169 to 178 (KKKLSKKKLA) are compositionally biased toward basic residues.

Belongs to the universal ribosomal protein uL22 family.

This Bombyx mori (Silk moth) protein is Large ribosomal subunit protein uL22 (RpL17).